A 79-amino-acid chain; its full sequence is Calcium/calmodulin-dependent protein kinase II inhibitor 2 (79 aa).

The disordered stretch occupies residues 1–21; that stretch reads MSEILPYSEDKMGRFGADPEG. The interval 43–69 is inhibitory domain; it reads KRPPKLGQIGRAKRVVIEDDRIDDVLK.

The protein belongs to the CAMK2N family. In terms of assembly, interacts with CAMK2A and CAMK2B in the presence of Ca(2+)/calmodulin or after autophosphorylation.

It localises to the nucleus. It is found in the cytoplasm. The protein localises to the cytosol. The protein resides in the synapse. Potent and specific cellular inhibitor of CaM-kinase II (CAMK2). Traps Ca(2+)/calmodulin on CAMK2. This chain is Calcium/calmodulin-dependent protein kinase II inhibitor 2 (CAMK2N2), found in Bos taurus (Bovine).